The sequence spans 409 residues: Elongation factor Tu, chloroplastic (409 aa).

A tr-type G domain is found at 10–214 (KPHVNIGTIG…AVDTYIPTPE (205 aa)). A G1 region spans residues 19–26 (GHVDHGKT). A GTP-binding site is contributed by 19–26 (GHVDHGKT). Thr26 lines the Mg(2+) pocket. The interval 60–64 (GITIN) is G2. The interval 81–84 (DCPG) is G3. GTP-binding positions include 81 to 85 (DCPGH) and 136 to 139 (NKED). The segment at 136–139 (NKED) is G4. Positions 174-176 (SAL) are G5.

Belongs to the TRAFAC class translation factor GTPase superfamily. Classic translation factor GTPase family. EF-Tu/EF-1A subfamily.

It localises to the plastid. The protein localises to the chloroplast. It carries out the reaction GTP + H2O = GDP + phosphate + H(+). GTP hydrolase that promotes the GTP-dependent binding of aminoacyl-tRNA to the A-site of ribosomes during protein biosynthesis. This is Elongation factor Tu, chloroplastic (tufA) from Pyropia yezoensis (Susabi-nori).